The sequence spans 709 residues: Leucine-rich repeat-containing protein 4B (709 aa).

Residues 1-38 (MAQAHIRGSPCPLLPPGRMSWPHGALLLLWLFSPPLRA) form the signal peptide. An LRRNT domain is found at 50–88 (GGGSPPATSCPAACSCSNQASRVICTRRELAEVPASIPV). LRR repeat units follow at residues 89–110 (NTRY…TFKH), 113–134 (HLEI…AFNG), 137–158 (SLNT…AFEY), 161–182 (KLRE…AFNR), 185–207 (SLRR…AFEG), 210–231 (NLRY…TALV), 232–253 (RLEE…SFQG), 256–277 (SLRK…AFDD), and 280–301 (SLEE…LFTP). N226 carries an N-linked (GlcNAc...) asparagine glycan. N-linked (GlcNAc...) asparagine glycosylation is found at N285, N335, N376, N402, N424, N427, N446, and N454. The 53-residue stretch at 313 to 365 (NPWHCNCDVLWLSWWLKETVPSNTTCCARCHAPAGLKGRYIGELDQSHFTCYA) folds into the LRRCT domain. Residues 366-454 (PVIVEPPTDL…GNTTASATLN (89 aa)) form the Ig-like C2-type domain. A disulfide bridge connects residues C387 and C438. Positions 496–552 (TQPGEEAQQPRGTEKEPPGPTTDGAWGGGRPDAAAPASASTTAPAPRSSRPTEKAFT) are disordered. Low complexity predominate over residues 528-544 (AAAPASASTTAPAPRSS). Residues 575 to 595 (IIIGCFVAITFMAAVMLVAFY) traverse the membrane as a helical segment. S689 carries the phosphoserine modification.

As to quaternary structure, interacts with PTPRF. Interacts with DLG4. Post-translationally, N-glycosylated. O-glycosylated; contains sialic acid.

The protein resides in the membrane. It localises to the presynaptic cell membrane. Functionally, synaptic adhesion protein. Regulates the formation of excitatory synapses. The trans-synaptic adhesion between LRRC4B and PTPRF regulates the formation of excitatory synapses in a bidirectional manner. In Mus musculus (Mouse), this protein is Leucine-rich repeat-containing protein 4B (Lrrc4b).